Consider the following 346-residue polypeptide: Serine/threonine-protein phosphatase PP1(5.9) (346 aa).

Mn(2+)-binding residues include Asp102, His104, Asp130, and Asn162. The Proton donor role is filled by His163. Residues His211 and His287 each contribute to the Mn(2+) site.

It belongs to the PPP phosphatase family. PP-1 subfamily. Mn(2+) serves as cofactor.

It carries out the reaction O-phospho-L-seryl-[protein] + H2O = L-seryl-[protein] + phosphate. It catalyses the reaction O-phospho-L-threonyl-[protein] + H2O = L-threonyl-[protein] + phosphate. The protein is Serine/threonine-protein phosphatase PP1(5.9) of Trypanosoma brucei brucei.